We begin with the raw amino-acid sequence, 332 residues long: L-lactate dehydrogenase A chain (332 aa).

NAD(+) is bound by residues 29–57 and R99; that span reads GAVGMACAISILMKDLADELALVDVVEDK. Positions 106, 138, and 169 each coordinate substrate. NAD(+) is bound at residue N138. Residue H193 is the Proton acceptor of the active site. A substrate-binding site is contributed by T248.

It belongs to the LDH/MDH superfamily. LDH family. As to quaternary structure, homotetramer.

The protein resides in the cytoplasm. The enzyme catalyses (S)-lactate + NAD(+) = pyruvate + NADH + H(+). Its pathway is fermentation; pyruvate fermentation to lactate; (S)-lactate from pyruvate: step 1/1. Interconverts simultaneously and stereospecifically pyruvate and lactate with concomitant interconversion of NADH and NAD(+). The sequence is that of L-lactate dehydrogenase A chain (LDHA) from Columba livia (Rock dove).